We begin with the raw amino-acid sequence, 262 residues long: 3-deoxy-manno-octulosonate cytidylyltransferase (262 aa).

This sequence belongs to the KdsB family.

It localises to the cytoplasm. It catalyses the reaction 3-deoxy-alpha-D-manno-oct-2-ulosonate + CTP = CMP-3-deoxy-beta-D-manno-octulosonate + diphosphate. It participates in nucleotide-sugar biosynthesis; CMP-3-deoxy-D-manno-octulosonate biosynthesis; CMP-3-deoxy-D-manno-octulosonate from 3-deoxy-D-manno-octulosonate and CTP: step 1/1. The protein operates within bacterial outer membrane biogenesis; lipopolysaccharide biosynthesis. Functionally, activates KDO (a required 8-carbon sugar) for incorporation into bacterial lipopolysaccharide in Gram-negative bacteria. This is 3-deoxy-manno-octulosonate cytidylyltransferase from Acidovorax sp. (strain JS42).